A 298-amino-acid polypeptide reads, in one-letter code: N-acetylmuramic acid 6-phosphate etherase (298 aa).

In terms of domain architecture, SIS spans 57-220; it reads IAAAFGKGGR…STGAMIRTGK (164 aa). Residue Glu-85 is the Proton donor of the active site. Glu-116 is a catalytic residue.

The protein belongs to the GCKR-like family. MurNAc-6-P etherase subfamily. Homodimer.

It carries out the reaction N-acetyl-D-muramate 6-phosphate + H2O = N-acetyl-D-glucosamine 6-phosphate + (R)-lactate. The protein operates within amino-sugar metabolism; 1,6-anhydro-N-acetylmuramate degradation. It functions in the pathway amino-sugar metabolism; N-acetylmuramate degradation. It participates in cell wall biogenesis; peptidoglycan recycling. In terms of biological role, specifically catalyzes the cleavage of the D-lactyl ether substituent of MurNAc 6-phosphate, producing GlcNAc 6-phosphate and D-lactate. Together with AnmK, is also required for the utilization of anhydro-N-acetylmuramic acid (anhMurNAc) either imported from the medium or derived from its own cell wall murein, and thus plays a role in cell wall recycling. This is N-acetylmuramic acid 6-phosphate etherase from Aeromonas hydrophila subsp. hydrophila (strain ATCC 7966 / DSM 30187 / BCRC 13018 / CCUG 14551 / JCM 1027 / KCTC 2358 / NCIMB 9240 / NCTC 8049).